The primary structure comprises 440 residues: Protein disulfide-isomerase A6 (440 aa).

Residues 1–19 form the signal peptide; that stretch reads MALLVLGLVSCTFFLAVNG. 2 consecutive Thioredoxin domains span residues 20-133 and 154-287; these read LYSS…ALRQ and SDSS…EDIA. Catalysis depends on nucleophile residues Cys55 and Cys58. A disulfide bridge connects residues Cys55 and Cys58. A Phosphoserine modification is found at Ser129. The disordered stretch occupies residues 141–161; that stretch reads GRSGGYSSGKQGRSDSSSKKD. The span at 152–161 shows a compositional bias: basic and acidic residues; the sequence is GRSDSSSKKD. Ser156 is subject to Phosphoserine; by FAM20C. The residue at position 158 (Ser158) is a Phosphoserine. Catalysis depends on nucleophile residues Cys190 and Cys193. An intrachain disulfide couples Cys190 to Cys193. At Ser428 the chain carries Phosphoserine. The short motif at 437–440 is the Prevents secretion from ER element; it reads KDEL.

It belongs to the protein disulfide isomerase family. As to quaternary structure, part of a large chaperone multiprotein complex comprising DNAJB11, HSP90B1, HSPA5, HYOU, PDIA2, PDIA4, PDIA6, PPIB, SDF2L1, UGGT1 and very small amounts of ERP29, but not, or at very low levels, CALR nor CANX. Interacts with MICA on the surface of tumor cells, leading to MICA disulfide bond reduction which is required for its release from tumor cells. Interacts with ITGB3 following platelet stimulation. Interacts with ERN1; the interaction is direct. Interacts with EIF2AK3. In terms of tissue distribution, expressed in platelets (at protein level).

The protein resides in the endoplasmic reticulum lumen. It is found in the cell membrane. Its subcellular location is the melanosome. The enzyme catalyses Catalyzes the rearrangement of -S-S- bonds in proteins.. In terms of biological role, may function as a chaperone that inhibits aggregation of misfolded proteins. Negatively regulates the unfolded protein response (UPR) through binding to UPR sensors such as ERN1, which in turn inactivates ERN1 signaling. May also regulate the UPR via the EIF2AK3 UPR sensor. Plays a role in platelet aggregation and activation by agonists such as convulxin, collagen and thrombin. The polypeptide is Protein disulfide-isomerase A6 (PDIA6) (Homo sapiens (Human)).